The following is a 359-amino-acid chain: Pheromone receptor 1 (359 aa).

7 helical membrane passes run 5–25 (VTPF…GWHI), 33–53 (ITLS…SVAW), 71–87 (LRHA…LVIA), 110–130 (IIID…LMIV), 147–167 (FLSL…IVSF), 206–226 (LLVL…GSVS), and 268–288 (LILS…MFGL). Residues 335–359 (TSGGIDGSPHSEKFSINTPTKYEEA) are disordered. Polar residues predominate over residues 348-359 (FSINTPTKYEEA).

This sequence belongs to the G-protein coupled receptor 4 family.

The protein resides in the membrane. Functionally, receptor for the A2 pheromone, a prenylated mating factor. This chain is Pheromone receptor 1 (PRA1), found in Ustilago hordei (Barley covered smut fungus).